The chain runs to 528 residues: Light-independent protochlorophyllide reductase subunit B (528 aa).

Asp-36 is a binding site for [4Fe-4S] cluster. The active-site Proton donor is Asp-274. 409 to 410 (GL) is a binding site for substrate. The segment at 429-471 (GPSHHGGHAPKPMHDAPAASAAAGAEASMAEETAAPSQDAPAA) is disordered. A compositionally biased stretch (low complexity) spans 444–465 (APAASAAAGAEASMAEETAAPS).

The protein belongs to the ChlB/BchB/BchZ family. Protochlorophyllide reductase is composed of three subunits; BchL, BchN and BchB. Forms a heterotetramer of two BchB and two BchN subunits. [4Fe-4S] cluster is required as a cofactor.

The enzyme catalyses chlorophyllide a + oxidized 2[4Fe-4S]-[ferredoxin] + 2 ADP + 2 phosphate = protochlorophyllide a + reduced 2[4Fe-4S]-[ferredoxin] + 2 ATP + 2 H2O. The protein operates within porphyrin-containing compound metabolism; bacteriochlorophyll biosynthesis (light-independent). Its function is as follows. Component of the dark-operative protochlorophyllide reductase (DPOR) that uses Mg-ATP and reduced ferredoxin to reduce ring D of protochlorophyllide (Pchlide) to form chlorophyllide a (Chlide). This reaction is light-independent. The NB-protein (BchN-BchB) is the catalytic component of the complex. This chain is Light-independent protochlorophyllide reductase subunit B, found in Dinoroseobacter shibae (strain DSM 16493 / NCIMB 14021 / DFL 12).